The following is a 142-amino-acid chain: Protein OrfX1 (142 aa).

Belongs to the TULIP P47 family. In terms of assembly, orfX1 was not detected as part of a crude toxin extract that includes BoNTA2/NTNH, P47, OrfX2 and OrfX3.

In terms of biological role, part of a botulinum neurotoxin type A2 (BoNT) locus; may be part of a progenitor toxin complex required to protect BoNT during its passage through the host gastrointestinal tract. Binds phosphatidylinositol (3,4) bisphosphate, phosphatidylethanolamine and phosphatidylserine. This chain is Protein OrfX1 (orfX1), found in Clostridium botulinum (strain Kyoto / Type A2).